A 1064-amino-acid chain; its full sequence is Adenylate cyclase type 4 (1064 aa).

Residues 1–28 (MARLFSPRPPPSEDLFYETYYSLSQQYP) lie on the Cytoplasmic side of the membrane. A run of 6 helical transmembrane segments spans residues 29-50 (LLILLLVIVLCAIVALPAVAWA), 61-80 (FLTTVLCALGGFSLLLGLAS), 94-117 (GLIWAALLALGYGFLFTGGVVSAW), 120-138 (VSFFLFIIFTVYAMLPLGM), 141-162 (AAAAGVISSLSHLLVLGLYLGW), and 170-190 (LLPQLAANAVLFLCGNVVGAY). The Cytoplasmic portion of the chain corresponds to 191–582 (HKALMERALR…YRLSALPAFK (392 aa)). Asp278, Ile279, and Asp322 together coordinate Mg(2+). ATP-binding positions include 278–283 (DIVGFT), 320–322 (LGD), and Arg366. Residues 498–523 (DSPASTSTPLPEKAFSPQWSLDRSRT) form a disordered region. Ser517 carries the post-translational modification Phosphoserine. Thr533 is modified (phosphothreonine). Helical transmembrane passes span 583–604 (YYAACTFLVFLSNFTIQMLVTT), 608–630 (ALATTYSITFLLFLLLLFVCFSE), and 661–684 (VALGTATILLVFTMAVVSLLFLPV). Topologically, residues 685-707 (SSDCPFLAPNVSSVAFNTSWELP) are extracellular. N-linked (GlcNAc...) asparagine glycans are attached at residues Asn694 and Asn701. The next 3 helical transmembrane spans lie at 708–733 (ASLPLISIPYSMHCCVLGFLSCSLFL), 741–761 (LLLLLLWLVASCSLFLHSHAW), and 788–804 (MGAIYFFIFFFTLLVLA). Residues 805–1064 (RQNEYYCRLD…LTRTGSPSAS (260 aa)) are Cytoplasmic-facing. ATP-binding positions include Lys914, 994–996 (DIW), 1001–1005 (NVASR), and Lys1041.

This sequence belongs to the adenylyl cyclase class-4/guanylyl cyclase family. Requires Mg(2+) as cofactor. The cofactor is Mn(2+). As to expression, widely distributed.

It is found in the cell membrane. The protein resides in the cytoplasm. The catalysed reaction is ATP = 3',5'-cyclic AMP + diphosphate. Activated by forskolin. Insensitive to calcium/calmodulin. Stimulated by GNAS and by the G-protein beta and gamma subunit complex. Its function is as follows. Catalyzes the formation of the signaling molecule cAMP in response to G-protein signaling. The protein is Adenylate cyclase type 4 (Adcy4) of Rattus norvegicus (Rat).